Consider the following 268-residue polypeptide: Phosphatidylglycerol--prolipoprotein diacylglyceryl transferase (268 aa).

7 helical membrane passes run 23–43, 62–82, 97–117, 132–152, 179–199, 206–226, and 241–261; these read IGLR…RWLA, LLFN…VFFY, VWEG…AMIW, FVAP…FINL, SQLY…NIFI, ASVA…VEYV, and GQAL…WAYS. Arginine 145 contributes to the a 1,2-diacyl-sn-glycero-3-phospho-(1'-sn-glycerol) binding site.

The protein belongs to the Lgt family.

It localises to the cell inner membrane. It carries out the reaction L-cysteinyl-[prolipoprotein] + a 1,2-diacyl-sn-glycero-3-phospho-(1'-sn-glycerol) = an S-1,2-diacyl-sn-glyceryl-L-cysteinyl-[prolipoprotein] + sn-glycerol 1-phosphate + H(+). Its pathway is protein modification; lipoprotein biosynthesis (diacylglyceryl transfer). Its function is as follows. Catalyzes the transfer of the diacylglyceryl group from phosphatidylglycerol to the sulfhydryl group of the N-terminal cysteine of a prolipoprotein, the first step in the formation of mature lipoproteins. In Haemophilus influenzae (strain PittEE), this protein is Phosphatidylglycerol--prolipoprotein diacylglyceryl transferase.